The chain runs to 153 residues: Large ribosomal subunit protein bL9 (153 aa).

This sequence belongs to the bacterial ribosomal protein bL9 family.

Binds to the 23S rRNA. This Tropheryma whipplei (strain Twist) (Whipple's bacillus) protein is Large ribosomal subunit protein bL9.